Consider the following 218-residue polypeptide: Ras-related protein RABA1h (218 aa).

20 to 27 provides a ligand contact to GTP; sequence GDSGVGKS. The Effector region signature appears at 42–50; it reads SRSTIGVEF. Residues 68 to 72, 126 to 129, and 156 to 157 contribute to the GTP site; these read DTAGQ, NKAD, and SA. Residues Cys-215 and Cys-216 are each lipidated (S-geranylgeranyl cysteine).

The protein belongs to the small GTPase superfamily. Rab family.

It is found in the cell membrane. Functionally, intracellular vesicle trafficking and protein transport. In Arabidopsis thaliana (Mouse-ear cress), this protein is Ras-related protein RABA1h (RABA1H).